A 93-amino-acid polypeptide reads, in one-letter code: Phosphoribosyl-ATP pyrophosphatase (93 aa).

It belongs to the PRA-PH family.

Its subcellular location is the cytoplasm. The enzyme catalyses 1-(5-phospho-beta-D-ribosyl)-ATP + H2O = 1-(5-phospho-beta-D-ribosyl)-5'-AMP + diphosphate + H(+). It functions in the pathway amino-acid biosynthesis; L-histidine biosynthesis; L-histidine from 5-phospho-alpha-D-ribose 1-diphosphate: step 2/9. The chain is Phosphoribosyl-ATP pyrophosphatase from Mycobacterium avium (strain 104).